Here is a 138-residue protein sequence, read N- to C-terminus: Acidic phospholipase A2 6 (138 aa).

The N-terminal stretch at M1–G16 is a signal peptide. 7 cysteine pairs are disulfide-bonded: C42–C131, C44–C60, C59–C111, C65–C138, C66–C104, C73–C97, and C91–C102. Ca(2+) contacts are provided by Y43, G45, and G47. The active site involves H63. D64 contacts Ca(2+). Residue D105 is part of the active site.

Belongs to the phospholipase A2 family. Group II subfamily. D49 sub-subfamily. Homodimer. Ca(2+) is required as a cofactor. Expressed by the venom gland.

It is found in the secreted. The enzyme catalyses a 1,2-diacyl-sn-glycero-3-phosphocholine + H2O = a 1-acyl-sn-glycero-3-phosphocholine + a fatty acid + H(+). Functionally, snake venom phospholipase A2 (PLA2) that has high lipolytic activity. PLA2 catalyzes the calcium-dependent hydrolysis of the 2-acyl groups in 3-sn-phosphoglycerides. This Craspedocephalus gramineus (Bamboo pit viper) protein is Acidic phospholipase A2 6.